Reading from the N-terminus, the 130-residue chain is Small ribosomal subunit protein uS9 (130 aa).

Belongs to the universal ribosomal protein uS9 family.

This Halorhodospira halophila (strain DSM 244 / SL1) (Ectothiorhodospira halophila (strain DSM 244 / SL1)) protein is Small ribosomal subunit protein uS9.